A 400-amino-acid chain; its full sequence is Forkhead box protein Q1 (400 aa).

The disordered stretch occupies residues 1-112 (MKLEVFVPRA…EGARSKPYTR (112 aa)). Residues 32–54 (LSAAGDDSLGSDGDCAANSPAAG) show a composition bias toward low complexity. Gly residues-rich tracts occupy residues 55-66 (SGAGDLEGGGGE) and 95-104 (CAGGVGGGEG). The fork-head DNA-binding region spans 115 to 210 (KPPYSYIALI…ADGVFRRRRK (96 aa)). The interval 213–264 (SHRTTVSASGLRPEEAPPGPAGTPQPAPAARSSPIARSPARQEERSSPASKF) is disordered. Residues 228–239 (APPGPAGTPQPA) show a composition bias toward pro residues. A compositionally biased stretch (low complexity) spans 240–251 (PAARSSPIARSP).

Expressed in kidney and stomach. Expression in the outer medulla of the kidney and the transitional epithelium. Expressed in the hair follicle medulla.

It localises to the nucleus. Plays a role in hair follicle differentiation. This Mus musculus (Mouse) protein is Forkhead box protein Q1 (Foxq1).